The sequence spans 173 residues: 3-hydroxydecanoyl-[acyl-carrier-protein] dehydratase (173 aa).

His-71 is a catalytic residue.

The protein belongs to the thioester dehydratase family. FabA subfamily. In terms of assembly, homodimer.

It is found in the cytoplasm. It catalyses the reaction a (3R)-hydroxyacyl-[ACP] = a (2E)-enoyl-[ACP] + H2O. The enzyme catalyses (3R)-hydroxydecanoyl-[ACP] = (2E)-decenoyl-[ACP] + H2O. The catalysed reaction is (2E)-decenoyl-[ACP] = (3Z)-decenoyl-[ACP]. It participates in lipid metabolism; fatty acid biosynthesis. Its function is as follows. Necessary for the introduction of cis unsaturation into fatty acids. Catalyzes the dehydration of (3R)-3-hydroxydecanoyl-ACP to E-(2)-decenoyl-ACP and then its isomerization to Z-(3)-decenoyl-ACP. Can catalyze the dehydratase reaction for beta-hydroxyacyl-ACPs with saturated chain lengths up to 16:0, being most active on intermediate chain length. This chain is 3-hydroxydecanoyl-[acyl-carrier-protein] dehydratase, found in Bradyrhizobium sp. (strain BTAi1 / ATCC BAA-1182).